Consider the following 390-residue polypeptide: Transforming growth factor beta-1 proprotein (390 aa).

The N-terminal stretch at 1 to 29 (MPPSGLRLLPLLLPLPWLLVLTPGRPAAG) is a signal peptide. Residues 30 to 74 (LSTCKTIDMELVKRKRIEAIRGQILSKLRLASPPSQGEVPPGPLP) are straightjacket domain. Residues 75–271 (EAVLALYNST…ATPLERAQHL (197 aa)) form an arm domain region. Asparagine 82, asparagine 136, and asparagine 176 each carry an N-linked (GlcNAc...) asparagine glycan. The interval 226-252 (DSKDNVLHVEINGISPKRRGDLGTIHD) is bowtie tail. Residues 244–246 (RGD) carry the Cell attachment site motif. Disulfide bonds link cysteine 285/cysteine 294, cysteine 293/cysteine 356, cysteine 322/cysteine 387, and cysteine 326/cysteine 389.

It belongs to the TGF-beta family. Homodimer; disulfide-linked. Interacts with the serine proteases, HTRA1 and HTRA3: the interaction with either inhibits TGFB1-mediated signaling and the HTRA protease activity is required for this inhibition. May interact with THSD4; this interaction may lead to sequestration by FBN1 microfibril assembly and attenuation of TGFB signaling. Interacts with CD109, DPT and ASPN. Interacts with EFEMP2. Interacts with TSKU; the interaction contributes to regulation of the hair cycle. Interacts with TGFBR3. As to quaternary structure, homodimer; disulfide-linked. Interacts with transforming growth factor beta-1 (TGF-beta-1) chain; interaction is non-covalent and maintains TGF-beta-1 in a latent state; each latency-associated peptide (LAP) monomer interacts with TGF-beta-1 in the other monomer. Interacts with LTBP1; leading to regulation of TGF-beta-1 activation. Interacts with LRRC32/GARP; leading to regulation of TGF-beta-1 activation on the surface of activated regulatory T-cells (Tregs). Interacts with LRRC33/NRROS; leading to regulation of TGF-beta-1 activation in macrophages and microglia. Interacts (via cell attachment site) with integrins ITGAV and ITGB6 (ITGAV:ITGB6), leading to release of the active TGF-beta-1. Interacts with NREP; the interaction results in a decrease in TGFB1 autoinduction. Interacts with HSP90AB1; inhibits latent TGFB1 activation. In terms of assembly, homodimer; disulfide-linked. Interacts with TGF-beta receptors (TGFBR1 and TGFBR2), leading to signal transduction. Post-translationally, transforming growth factor beta-1 proprotein: The precursor proprotein is cleaved in the Golgi apparatus by FURIN to form Transforming growth factor beta-1 (TGF-beta-1) and Latency-associated peptide (LAP) chains, which remain non-covalently linked, rendering TGF-beta-1 inactive. In terms of processing, N-glycosylated. Deglycosylation leads to activation of Transforming growth factor beta-1 (TGF-beta-1); mechanisms triggering deglycosylation-driven activation of TGF-beta-1 are however unclear. Abundant in the bone matrix. Expressed in cardiomyocytes.

It localises to the secreted. The protein resides in the extracellular space. Its subcellular location is the extracellular matrix. Functionally, transforming growth factor beta-1 proprotein: Precursor of the Latency-associated peptide (LAP) and Transforming growth factor beta-1 (TGF-beta-1) chains, which constitute the regulatory and active subunit of TGF-beta-1, respectively. Required to maintain the Transforming growth factor beta-1 (TGF-beta-1) chain in a latent state during storage in extracellular matrix. Associates non-covalently with TGF-beta-1 and regulates its activation via interaction with 'milieu molecules', such as LTBP1, LRRC32/GARP and LRRC33/NRROS, that control activation of TGF-beta-1. Interaction with LRRC33/NRROS regulates activation of TGF-beta-1 in macrophages and microglia. Interaction with LRRC32/GARP controls activation of TGF-beta-1 on the surface of activated regulatory T-cells (Tregs). Interaction with integrins (ITGAV:ITGB6 or ITGAV:ITGB8) results in distortion of the Latency-associated peptide chain and subsequent release of the active TGF-beta-1. Its function is as follows. Multifunctional protein that regulates the growth and differentiation of various cell types and is involved in various processes, such as normal development, immune function, microglia function and responses to neurodegeneration. Activation into mature form follows different steps: following cleavage of the proprotein in the Golgi apparatus, Latency-associated peptide (LAP) and Transforming growth factor beta-1 (TGF-beta-1) chains remain non-covalently linked rendering TGF-beta-1 inactive during storage in extracellular matrix. At the same time, LAP chain interacts with 'milieu molecules', such as LTBP1, LRRC32/GARP and LRRC33/NRROS that control activation of TGF-beta-1 and maintain it in a latent state during storage in extracellular milieus. TGF-beta-1 is released from LAP by integrins (ITGAV:ITGB6 or ITGAV:ITGB8): integrin-binding to LAP stabilizes an alternative conformation of the LAP bowtie tail and results in distortion of the LAP chain and subsequent release of the active TGF-beta-1. Once activated following release of LAP, TGF-beta-1 acts by binding to TGF-beta receptors (TGFBR1 and TGFBR2), which transduce signal. While expressed by many cells types, TGF-beta-1 only has a very localized range of action within cell environment thanks to fine regulation of its activation by Latency-associated peptide chain (LAP) and 'milieu molecules'. Plays an important role in bone remodeling: acts as a potent stimulator of osteoblastic bone formation, causing chemotaxis, proliferation and differentiation in committed osteoblasts. Can promote either T-helper 17 cells (Th17) or regulatory T-cells (Treg) lineage differentiation in a concentration-dependent manner. At high concentrations, leads to FOXP3-mediated suppression of RORC and down-regulation of IL-17 expression, favoring Treg cell development. At low concentrations in concert with IL-6 and IL-21, leads to expression of the IL-17 and IL-23 receptors, favoring differentiation to Th17 cells. Stimulates sustained production of collagen through the activation of CREB3L1 by regulated intramembrane proteolysis (RIP). Mediates SMAD2/3 activation by inducing its phosphorylation and subsequent translocation to the nucleus. Positively regulates odontoblastic differentiation in dental papilla cells, via promotion of IPO7-mediated translocation of phosphorylated SMAD2 to the nucleus and subsequent transcription of target genes. Can induce epithelial-to-mesenchymal transition (EMT) and cell migration in various cell types. This is Transforming growth factor beta-1 proprotein (Tgfb1) from Rattus norvegicus (Rat).